The chain runs to 163 residues: ATP synthase subunit b 1 (163 aa).

Residues 7-27 (AETWVAVAFVILMALFAYLGV) form a helical membrane-spanning segment.

It belongs to the ATPase B chain family. As to quaternary structure, F-type ATPases have 2 components, F(1) - the catalytic core - and F(0) - the membrane proton channel. F(1) has five subunits: alpha(3), beta(3), gamma(1), delta(1), epsilon(1). F(0) has three main subunits: a(1), b(2) and c(10-14). The alpha and beta chains form an alternating ring which encloses part of the gamma chain. F(1) is attached to F(0) by a central stalk formed by the gamma and epsilon chains, while a peripheral stalk is formed by the delta and b chains.

Its subcellular location is the cell inner membrane. F(1)F(0) ATP synthase produces ATP from ADP in the presence of a proton or sodium gradient. F-type ATPases consist of two structural domains, F(1) containing the extramembraneous catalytic core and F(0) containing the membrane proton channel, linked together by a central stalk and a peripheral stalk. During catalysis, ATP synthesis in the catalytic domain of F(1) is coupled via a rotary mechanism of the central stalk subunits to proton translocation. In terms of biological role, component of the F(0) channel, it forms part of the peripheral stalk, linking F(1) to F(0). The chain is ATP synthase subunit b 1 from Rhodopseudomonas palustris (strain BisB5).